A 582-amino-acid chain; its full sequence is External alternative NADH-ubiquinone oxidoreductase, mitochondrial (582 aa).

A mitochondrion-targeting transit peptide spans 1 to 30 (MLRLRPAVRAVSVARSVALTRSLHVSVAKF). The interval 46-65 (KQTAGHQGHHQEIPKPDENH) is disordered. Basic and acidic residues predominate over residues 54 to 65 (HHQEIPKPDENH). 114 to 144 (TLVVLGSGWGSVSFLKKLDTSNYNVIVVSPR) serves as a coordination point for FAD. 277–313 (LHTVVVGGGPTGVEFAAELQDFFEDDLRKWIPDIRDD) lines the NAD(+) pocket. Residues 454–501 (LLNGIAKTEDLNNEITNLEKQSEHTFDEQERKNIFAQLESKSRKLRRS) are a coiled coil.

Belongs to the NADH dehydrogenase family. The cofactor is FAD.

The protein localises to the mitochondrion inner membrane. The enzyme catalyses a quinone + NADH + H(+) = a quinol + NAD(+). It catalyses the reaction a ubiquinone + NADH + H(+) = a ubiquinol + NAD(+). Functionally, alternative NADH-ubiquinone oxidoreductase which catalyzes the oxidation of mitochondrial NADH does not translocate protons across the inner mitochondrial membrane. In Yarrowia lipolytica (strain CLIB 122 / E 150) (Yeast), this protein is External alternative NADH-ubiquinone oxidoreductase, mitochondrial (NDH2).